A 218-amino-acid polypeptide reads, in one-letter code: Cytochrome b6 (218 aa).

The helical transmembrane segment at 35–55 (IFYCLGGITLVCFLIQFATGF) threads the bilayer. Residue C38 coordinates heme c. Heme b is bound by residues H89 and H103. A run of 3 helical transmembrane segments spans residues 93-113 (ASMM…TGGF), 119-139 (LTWV…VTGY), and 189-209 (LHTF…FLMI). Heme b contacts are provided by H190 and H205.

This sequence belongs to the cytochrome b family. PetB subfamily. The 4 large subunits of the cytochrome b6-f complex are cytochrome b6, subunit IV (17 kDa polypeptide, PetD), cytochrome f and the Rieske protein, while the 4 small subunits are PetG, PetL, PetM and PetN. The complex functions as a dimer. The cofactor is heme b. Requires heme c as cofactor.

Its subcellular location is the cellular thylakoid membrane. Its function is as follows. Component of the cytochrome b6-f complex, which mediates electron transfer between photosystem II (PSII) and photosystem I (PSI), cyclic electron flow around PSI, and state transitions. In Prochlorococcus marinus (strain MIT 9301), this protein is Cytochrome b6.